The sequence spans 313 residues: Putative S-adenosyl-L-methionine-dependent methyltransferase MMAR_0955 (313 aa).

Residues Asp-132 and 161-162 each bind S-adenosyl-L-methionine; that span reads DL.

It belongs to the UPF0677 family.

In terms of biological role, exhibits S-adenosyl-L-methionine-dependent methyltransferase activity. The polypeptide is Putative S-adenosyl-L-methionine-dependent methyltransferase MMAR_0955 (Mycobacterium marinum (strain ATCC BAA-535 / M)).